A 213-amino-acid polypeptide reads, in one-letter code: Large ribosomal subunit protein uL3 (213 aa).

Glutamine 151 carries the post-translational modification N5-methylglutamine.

The protein belongs to the universal ribosomal protein uL3 family. As to quaternary structure, part of the 50S ribosomal subunit. Forms a cluster with proteins L14 and L19. In terms of processing, methylated by PrmB.

In terms of biological role, one of the primary rRNA binding proteins, it binds directly near the 3'-end of the 23S rRNA, where it nucleates assembly of the 50S subunit. This chain is Large ribosomal subunit protein uL3, found in Rhizobium leguminosarum bv. trifolii (strain WSM2304).